Consider the following 261-residue polypeptide: MDGKLRADEVAVTKSILKSTFNMWMDVIDVDVVIVGAGPSGLTAAKYLAQKGVKTVVLERHLSFGGGTWGGGMGFPNIVVEKPADEILREAGIKLDEVDGEDELFTADSVEVPAKLGVAAIDAGAKILTGIVVEDLILKEDKIAGVVIQSYAIEKAGLHIDPLTISAKYVIDSTGHDASAVHTLARKNKDLGIEVPGEKSMWAEKGENSLTRNTREIFPGLYVCGMAANAYHAGYRMGAIFGGMYLSGKKCAEMILEKMEK.

Residues S40, 59–60 (ER), G67, V133, and 159–161 (HID) contribute to the NAD(+) site. Residues D161 and H176 each contribute to the Fe cation site. 2 residues coordinate NAD(+): S179 and M226. R236 serves as a coordination point for glycine.

It belongs to the THI4 family. In terms of assembly, homooctamer; tetramer of dimers. Fe(2+) serves as cofactor.

It catalyses the reaction hydrogen sulfide + glycine + NAD(+) = ADP-5-ethyl-4-methylthiazole-2-carboxylate + nicotinamide + 3 H2O + H(+). Its pathway is cofactor biosynthesis; thiamine diphosphate biosynthesis. Its function is as follows. Involved in the biosynthesis of the thiazole moiety of thiamine. Catalyzes the conversion of NAD and glycine to adenosine diphosphate 5-(2-hydroxyethyl)-4-methylthiazole-2-carboxylate (ADT), an adenylated thiazole intermediate, using free sulfide as a source of sulfur. This is Thiamine thiazole synthase from Methanococcus maripaludis (strain C5 / ATCC BAA-1333).